A 369-amino-acid polypeptide reads, in one-letter code: Queuine tRNA-ribosyltransferase accessory subunit 2 (369 aa).

The interval 263–282 (SSKLTEVEEENGNDSSNDQD) is disordered. Positions 308, 310, 313, and 339 each coordinate Zn(2+).

This sequence belongs to the queuine tRNA-ribosyltransferase family. QTRT2 subfamily. As to quaternary structure, heterodimer of a catalytic subunit and an accessory subunit. The cofactor is Zn(2+).

It localises to the cytoplasm. Functionally, non-catalytic subunit of the queuine tRNA-ribosyltransferase (TGT) that catalyzes the base-exchange of a guanine (G) residue with queuine (Q) at position 34 (anticodon wobble position) in tRNAs with GU(N) anticodons (tRNA-Asp, -Asn, -His and -Tyr), resulting in the hypermodified nucleoside queuosine (7-(((4,5-cis-dihydroxy-2-cyclopenten-1-yl)amino)methyl)-7-deazaguanosine). This chain is Queuine tRNA-ribosyltransferase accessory subunit 2, found in Trichoplax adhaerens (Trichoplax reptans).